Reading from the N-terminus, the 1407-residue chain is DNA-directed RNA polymerase subunit beta' (1407 aa).

Zn(2+) contacts are provided by Cys-70, Cys-72, Cys-85, and Cys-88. Mg(2+)-binding residues include Asp-460, Asp-462, and Asp-464. Lys-972 is subject to N6-acetyllysine.

Belongs to the RNA polymerase beta' chain family. The RNAP catalytic core consists of 2 alpha, 1 beta, 1 beta' and 1 omega subunit. When a sigma factor is associated with the core the holoenzyme is formed, which can initiate transcription. The cofactor is Mg(2+). It depends on Zn(2+) as a cofactor.

It catalyses the reaction RNA(n) + a ribonucleoside 5'-triphosphate = RNA(n+1) + diphosphate. DNA-dependent RNA polymerase catalyzes the transcription of DNA into RNA using the four ribonucleoside triphosphates as substrates. The chain is DNA-directed RNA polymerase subunit beta' from Escherichia coli O6:K15:H31 (strain 536 / UPEC).